The chain runs to 141 residues: Pyrophosphate-energized proton pump (141 aa).

The next 3 membrane-spanning stretches (helical) occupy residues 11 to 31, 46 to 66, and 121 to 141; these read GLIA…TLTV, GTNL…IVVI, and LAGL…AGMI.

The protein belongs to the H(+)-translocating pyrophosphatase (TC 3.A.10) family. Homodimer. Requires Mg(2+) as cofactor.

Its subcellular location is the cell inner membrane. The enzyme catalyses diphosphate + H2O + H(+)(in) = 2 phosphate + 2 H(+)(out). In terms of biological role, proton pump that utilizes the energy of pyrophosphate hydrolysis as the driving force for proton movement across the membrane. Generates a proton motive force. This Anaplasma marginale protein is Pyrophosphate-energized proton pump (hppA).